The chain runs to 1193 residues: Magnesium-chelatase subunit H (1193 aa).

This sequence belongs to the Mg-chelatase subunit H family.

The enzyme catalyses protoporphyrin IX + Mg(2+) + ATP + H2O = Mg-protoporphyrin IX + ADP + phosphate + 3 H(+). It participates in porphyrin-containing compound metabolism; bacteriochlorophyll biosynthesis (light-independent). In terms of biological role, involved in bacteriochlorophyll pigment biosynthesis; introduces a magnesium ion into protoporphyrin IX to yield Mg-protoroporphyrin IX. This Cereibacter sphaeroides (strain ATCC 17023 / DSM 158 / JCM 6121 / CCUG 31486 / LMG 2827 / NBRC 12203 / NCIMB 8253 / ATH 2.4.1.) (Rhodobacter sphaeroides) protein is Magnesium-chelatase subunit H (bchH).